The following is a 688-amino-acid chain: Sialic acid-binding Ig-like lectin 10 (688 aa).

Residues 1-17 (MSLLLFLLSFLLDGPQG) form the signal peptide. Over 18 to 543 (QMESYFLQVQ…DKDSATAFSK (526 aa)) the chain is Extracellular. Positions 26 to 138 (VQRIVKAQEG…SFKEEFRLQV (113 aa)) constitute an Ig-like V-type domain. 3 disulfides stabilise this stretch: Cys37–Cys172, Cys42–Cys102, and Cys163–Cys214. An N-acetylneuraminate-binding site is contributed by Arg120. In terms of domain architecture, Ig-like C2-type 1 spans 145–228 (PDIFIPEVLE…SRMSTQRTVR (84 aa)). N-linked (GlcNAc...) asparagine glycans are attached at residues Asn195 and Asn246. Ig-like C2-type domains lie at 250 to 334 (PDLH…LDLS) and 339 to 436 (PQDL…LSLS). 2 disulfides stabilise this stretch: Cys271–Cys318 and Cys375–Cys420. The helical transmembrane segment at 544-564 (GAVLGFGITALLALCLIVVIV) threads the bilayer. Residues 565 to 688 (KTLQKKGTQE…YSDYTEVRVH (124 aa)) lie on the Cytoplasmic side of the membrane. The short motif at 588-593 (LDYINV) is the ITIM motif 1 element. Positions 602–656 (RNWKAEPDAPSRSSPLDTHFPKPKKKQKDPHFTYPGCPDPTSSSQVPVSENNPEE) are disordered. A compositionally biased stretch (polar residues) spans 641–652 (PTSSSQVPVSEN). The short motif at 657-662 (LHYAAL) is the ITIM motif 2 element. Tyr659 is modified (phosphotyrosine).

Belongs to the immunoglobulin superfamily. SIGLEC (sialic acid binding Ig-like lectin) family. As to quaternary structure, interacts with PTPN6/SHP-1 upon phosphorylation. Interacts with NCF1. Interacts with CD24; the probable CD24:SIGLEC10 complex is proposed to inhibit HGMB1-mediated tissue damage immune response. Interacts with HMGB1; the interaction is dependent on CD24. Associates with membrane IgM on the B cell surface. Interacts with RIGI, CBL and PTPN11. Phosphorylation of Tyr-659 is involved in binding to PTPN6. Expressed in B cells with high levels in pre-B cells and B1a cells of the peritoneal cavity.

Its subcellular location is the cell membrane. In terms of biological role, putative adhesion molecule that mediates sialic-acid dependent binding to cells. Preferentially binds to alpha-2,3- or alpha-2,6-linked sialic acid. The sialic acid recognition site may be masked by cis interactions with sialic acids on the same cell surface. In the immune response, seems to act as an inhibitory receptor upon ligand induced tyrosine phosphorylation by recruiting cytoplasmic phosphatase(s) via their SH2 domain(s) that block signal transduction through dephosphorylation of signaling molecules. Involved in negative regulation of B-cell antigen receptor signaling and specifically acts on B1 cells to inhibit Ca(2+) signaling, cellular expansion and antibody secretion. The inhibition of B cell activation is dependent on PTPN6/SHP-1. In association with CD24 may be involved in the selective suppression of the immune response to danger-associated molecular patterns (DAMPs) such as HMGB1, HSP70 and HSP90. In association with CD24 may regulate the immune repsonse of natural killer (NK) cells. Plays a role in the control of autoimmunity. During initiation of adaptive immune responses by CD8-alpha(+) dendritic cells inhibits cross-presentation by impairing the formation of MHC class I-peptide complexes. The function seems to implicate recruitment of PTPN6/SHP-1, which dephosphorylates NCF1 of the NADPH oxidase complex consequently promoting phagosomal acidification. Its function is as follows. (Microbial infection) During infection by RNA viruses inhibits RIG-I signaling in macrophages by promoting its CBL-dependent ubiquitination and degradation via PTPN11/SHP-2. The protein is Sialic acid-binding Ig-like lectin 10 (Siglec10) of Mus musculus (Mouse).